The sequence spans 239 residues: MKIDILTLFPDMFAPLEYSIVGKAKDKGILEINYHNFRDNAEKARHVDDEPYGGGQGMLLRAQPIFDTFDKLNVTKPRVILLDPAGRTFNQAYAEELAQEEELVFICGHYEGYDERTKTLVTDEISLGDFVLTGGELAAMTIVDATVRLIPEVLGKEASHKDDSFSSGLLEFPQYTRPAEFRGMKVPDVLLSGHHVNIRRWRMEQSLRKTWERRPDLLENYDFTDEERQILEEIKSEGK.

S-adenosyl-L-methionine contacts are provided by residues glycine 108 and 127 to 132 (LGDFVL).

The protein belongs to the RNA methyltransferase TrmD family. In terms of assembly, homodimer.

It is found in the cytoplasm. It carries out the reaction guanosine(37) in tRNA + S-adenosyl-L-methionine = N(1)-methylguanosine(37) in tRNA + S-adenosyl-L-homocysteine + H(+). Specifically methylates guanosine-37 in various tRNAs. This Streptococcus thermophilus (strain CNRZ 1066) protein is tRNA (guanine-N(1)-)-methyltransferase.